The following is a 183-amino-acid chain: Ribosome-recycling factor (183 aa).

The protein belongs to the RRF family.

The protein resides in the cytoplasm. In terms of biological role, responsible for the release of ribosomes from messenger RNA at the termination of protein biosynthesis. May increase the efficiency of translation by recycling ribosomes from one round of translation to another. The sequence is that of Ribosome-recycling factor from Buchnera aphidicola subsp. Baizongia pistaciae (strain Bp).